Consider the following 379-residue polypeptide: Deoxyuridine 5'-triphosphate nucleotidohydrolase (379 aa).

This sequence belongs to the dUTPase family. The cofactor is Mg(2+).

It catalyses the reaction dUTP + H2O = dUMP + diphosphate + H(+). In terms of biological role, involved in nucleotide metabolism: produces dUMP, the immediate precursor of thymidine nucleotides and decreases the intracellular concentration of dUTP to avoid uracil incorporation into viral DNA. The sequence is that of Deoxyuridine 5'-triphosphate nucleotidohydrolase from Human herpesvirus 7 (strain JI) (HHV-7).